A 210-amino-acid polypeptide reads, in one-letter code: ATP phosphoribosyltransferase (210 aa).

This sequence belongs to the ATP phosphoribosyltransferase family. Short subfamily. As to quaternary structure, heteromultimer composed of HisG and HisZ subunits.

Its subcellular location is the cytoplasm. It carries out the reaction 1-(5-phospho-beta-D-ribosyl)-ATP + diphosphate = 5-phospho-alpha-D-ribose 1-diphosphate + ATP. It functions in the pathway amino-acid biosynthesis; L-histidine biosynthesis; L-histidine from 5-phospho-alpha-D-ribose 1-diphosphate: step 1/9. Its function is as follows. Catalyzes the condensation of ATP and 5-phosphoribose 1-diphosphate to form N'-(5'-phosphoribosyl)-ATP (PR-ATP). Has a crucial role in the pathway because the rate of histidine biosynthesis seems to be controlled primarily by regulation of HisG enzymatic activity. The chain is ATP phosphoribosyltransferase from Bacillus cytotoxicus (strain DSM 22905 / CIP 110041 / 391-98 / NVH 391-98).